Here is an 842-residue protein sequence, read N- to C-terminus: Squamosa promoter-binding-like protein 9 (842 aa).

A compositionally biased stretch (gly residues) spans 1–18 (MDAPGGGGGGGGGGGGVD). Disordered stretches follow at residues 1-22 (MDAP…AGEP), 59-97 (ALLP…RVRK), and 140-168 (RKKP…TPAE). Over residues 69–85 (PAEAEAEAAGPASLPSS) the composition is skewed to low complexity. A compositionally biased stretch (gly residues) spans 146-162 (AGRGSGAAVGGSGGGAS). The segment at 168–245 (EMKCQVPGCE…ERHNKRRRRK (78 aa)) adopts an SBP-type; atypical zinc-finger fold. 8 residues coordinate Zn(2+): Cys-171, Cys-176, Cys-193, Cys-196, Cys-212, Cys-215, His-219, and Cys-231. Positions 228 to 244 (KRSCRRKLERHNKRRRR) match the Bipartite nuclear localization signal motif. The segment covering 236 to 246 (ERHNKRRRRKP) has biased composition (basic residues). The disordered stretch occupies residues 236 to 256 (ERHNKRRRRKPDSKGILEKDI).

In terms of tissue distribution, ubiquitous.

Its subcellular location is the nucleus. Its function is as follows. Trans-acting factor that binds specifically to the consensus nucleotide sequence 5'-TNCGTACAA-3'. This chain is Squamosa promoter-binding-like protein 9 (SPL9), found in Oryza sativa subsp. japonica (Rice).